The chain runs to 383 residues: Meiotically up-regulated gene 93 protein (383 aa).

A TPR repeat occupies 75–108 (KKVIWRRGLAYLRLGHPHLANRDWEHSLELDPNN).

It is found in the cytoplasm. It localises to the nucleus. In terms of biological role, has a role in meiosis. The protein is Meiotically up-regulated gene 93 protein (mug93) of Schizosaccharomyces pombe (strain 972 / ATCC 24843) (Fission yeast).